We begin with the raw amino-acid sequence, 161 residues long: MFSLTKSVLFTSIVAIAAQATTAVSSPTQTSLPGLASQVPNCVAVCLRNLHESIGCDVGDIVCLCKSKASLISKVGLCVVGSQCDFEDASSSTDIVRDMCDLVAEDPGTAVIASASKVLDAVVASATTSDIEAPTSTNAAGLVAYDVVKVVVVGAAAAIAI.

Positions 1 to 23 (MFSLTKSVLFTSIVAIAAQATTA) are cleaved as a signal peptide. One can recognise a CFEM domain in the interval 24–126 (VSSPTQTSLP…KVLDAVVASA (103 aa)). 3 disulfide bridges follow: Cys46–Cys78, Cys56–Cys63, and Cys65–Cys100. Asp60 is a binding site for heme.

The protein belongs to the RBT5 family. As to quaternary structure, interacts with Z.mays LRR5; the interaction is direct. Interacts with Z.mays WAK17 isoform 2; the interaction is direct.

Its subcellular location is the membrane. It localises to the secreted. Its function is as follows. Suppresses host programmed cell death during infection by binding to Z.mays WAK17 isoform 2 and Z.mays LRR5, to prevent activation of Z.mays WAK17 isoform 1 and the downstream hypersensitive response. The polypeptide is Effector CFEM5 (Gibberella zeae (strain ATCC MYA-4620 / CBS 123657 / FGSC 9075 / NRRL 31084 / PH-1) (Wheat head blight fungus)).